The primary structure comprises 119 residues: Ribonuclease P protein component (119 aa).

It belongs to the RnpA family. Consists of a catalytic RNA component (M1 or rnpB) and a protein subunit.

The enzyme catalyses Endonucleolytic cleavage of RNA, removing 5'-extranucleotides from tRNA precursor.. Its function is as follows. RNaseP catalyzes the removal of the 5'-leader sequence from pre-tRNA to produce the mature 5'-terminus. It can also cleave other RNA substrates such as 4.5S RNA. The protein component plays an auxiliary but essential role in vivo by binding to the 5'-leader sequence and broadening the substrate specificity of the ribozyme. This is Ribonuclease P protein component from Cronobacter sakazakii (strain ATCC BAA-894) (Enterobacter sakazakii).